A 209-amino-acid polypeptide reads, in one-letter code: PRA1 family protein E (209 aa).

Residues Met-1–Pro-20 form a disordered region. The span at Gly-9–Gly-19 shows a compositional bias: gly residues. 3 helical membrane-spanning segments follow: residues Ile-90–Ile-110, Val-132–Thr-152, and Gly-155–Phe-175.

It belongs to the PRA1 family. As to quaternary structure, interacts with PRA1B1, PRA1B2, PRA1B3, PRA1B4, PRA1B5 and PRA1B6. As to expression, expressed in hypocotyls, roots, lateral roots, columella cells, leaves and shoot apex.

The protein resides in the endosome membrane. In terms of biological role, may be involved in both secretory and endocytic intracellular trafficking in the endosomal/prevacuolar compartments. This chain is PRA1 family protein E (PRA1E), found in Arabidopsis thaliana (Mouse-ear cress).